The primary structure comprises 159 residues: Eukaryotic translation initiation factor 5A-3 (159 aa).

Residues Met-1–Ala-12 show a composition bias toward basic and acidic residues. Residues Met-1–Pro-21 are disordered. At Lys-52 the chain carries Hypusine.

The protein belongs to the eIF-5A family. In terms of processing, lys-52 undergoes hypusination, a unique post-translational modification that consists in the addition of a butylamino group from spermidine to lysine side chain, leading to the formation of the unusual amino acid hypusine. eIF-5As are the only known proteins to undergo this modification, which is essential for their function.

In terms of biological role, translation factor that promotes translation elongation and termination, particularly upon ribosome stalling at specific amino acid sequence contexts. Binds between the exit (E) and peptidyl (P) site of the ribosome and promotes rescue of stalled ribosome: specifically required for efficient translation of polyproline-containing peptides as well as other motifs that stall the ribosome. Acts as a ribosome quality control (RQC) cofactor by joining the RQC complex to facilitate peptidyl transfer during CAT tailing step. In Solanum lycopersicum (Tomato), this protein is Eukaryotic translation initiation factor 5A-3.